Consider the following 95-residue polypeptide: Turripeptide OL184 (95 aa).

Contains 5 disulfide bonds. Expressed by the venom duct.

Its subcellular location is the secreted. Acts as a neurotoxin by inhibiting an ion channel. This is Turripeptide OL184 from Iotyrris olangoensis (Sea snail).